We begin with the raw amino-acid sequence, 366 residues long: 1-deoxy-D-xylulose 5-phosphate reductoisomerase (366 aa).

NADPH is bound by residues threonine 7, glycine 8, serine 9, isoleucine 10, glycine 31, lysine 32, asparagine 33, and asparagine 113. Lysine 114 lines the 1-deoxy-D-xylulose 5-phosphate pocket. Glutamate 115 is an NADPH binding site. Residue aspartate 133 participates in Mn(2+) binding. The 1-deoxy-D-xylulose 5-phosphate site is built by serine 134, glutamate 135, serine 158, and histidine 181. Glutamate 135 contacts Mn(2+). Glycine 187 serves as a coordination point for NADPH. Residues serine 194, asparagine 199, lysine 200, and glutamate 203 each contribute to the 1-deoxy-D-xylulose 5-phosphate site. Glutamate 203 is a binding site for Mn(2+).

The protein belongs to the DXR family. Requires Mg(2+) as cofactor. Mn(2+) is required as a cofactor.

The catalysed reaction is 2-C-methyl-D-erythritol 4-phosphate + NADP(+) = 1-deoxy-D-xylulose 5-phosphate + NADPH + H(+). The protein operates within isoprenoid biosynthesis; isopentenyl diphosphate biosynthesis via DXP pathway; isopentenyl diphosphate from 1-deoxy-D-xylulose 5-phosphate: step 1/6. In terms of biological role, catalyzes the NADPH-dependent rearrangement and reduction of 1-deoxy-D-xylulose-5-phosphate (DXP) to 2-C-methyl-D-erythritol 4-phosphate (MEP). This is 1-deoxy-D-xylulose 5-phosphate reductoisomerase from Helicobacter pylori (strain G27).